Consider the following 52-residue polypeptide: U-scutigerotoxin(01)-Tl1a (52 aa).

A signal peptide spans 1-25 (MLAKAMSLLMMFLLVLVIGSVMVSA).

The protein belongs to the scutigerotoxin-01 family. In terms of processing, contains 1 disulfide bond. As to expression, expressed by the venom gland.

It localises to the secreted. The polypeptide is U-scutigerotoxin(01)-Tl1a (Thereuopoda longicornis (Long-legged centipede)).